The sequence spans 443 residues: GPI mannosyltransferase 1 (443 aa).

11 consecutive transmembrane segments (helical) span residues 8–28, 68–88, 90–110, 136–156, 160–180, 232–252, 273–291, 302–322, 347–367, 374–394, and 406–426; these read PFMV…YGAW, PLLA…FSFG, ALFA…LTLT, TRGS…WAVL, IYLG…PFIY, LTLI…LHYG, FSPY…AGAV, FESL…PLVL, SQYF…SSLL, IAVA…GYLL, and LFLA…VIVA.

This sequence belongs to the PIGM family.

It localises to the endoplasmic reticulum membrane. It participates in glycolipid biosynthesis; glycosylphosphatidylinositol-anchor biosynthesis. Functionally, mannosyltransferase involved in glycosylphosphatidylinositol-anchor biosynthesis. Transfers the first alpha-1,4-mannose to GlcN-acyl-PI during GPI precursor assembly. Required for cell wall integrity. The sequence is that of GPI mannosyltransferase 1 (gpi14) from Emericella nidulans (strain FGSC A4 / ATCC 38163 / CBS 112.46 / NRRL 194 / M139) (Aspergillus nidulans).